The primary structure comprises 144 residues: Cornifin-A (144 aa).

A disordered region spans residues 1-41; sequence MSSHQQKQPCTVPPQLHQQQVKQPCQPPPQEPCAPKTKDPC. Over residues 13 to 24 the composition is skewed to low complexity; sequence PPQLHQQQVKQP. 13 tandem repeats follow at residues 27 to 34, 35 to 42, 43 to 49, 50 to 57, 58 to 65, 66 to 73, 74 to 81, 82 to 89, 90 to 97, 98 to 105, 106 to 113, 114 to 121, and 122 to 129. A 13 X 8 AA approximate tandem repeats region spans residues 27 to 129; that stretch reads PPPQEPCAPK…CHPVVPEPCP (103 aa).

This sequence belongs to the cornifin (SPRR) family. Expressed in fetal periderm, hair follicles and in the thickened epidermis of the lip and footpad. Also present in the epithelia of various tissues such as the penis, vagina, forestomach, tongue and esophagus.

It localises to the cytoplasm. Cross-linked envelope protein of keratinocytes. It is a keratinocyte protein that first appears in the cell cytosol, but ultimately becomes cross-linked to membrane proteins by transglutaminase. All that results in the formation of an insoluble envelope beneath the plasma membrane. May participate widely in the construction of cell envelopes in cornifying epithelia characterized by either increased thickness or a requirement for extreme flexibility. The protein is Cornifin-A (Sprr1a) of Mus musculus (Mouse).